A 146-amino-acid polypeptide reads, in one-letter code: Large ribosomal subunit protein uL24 (146 aa).

The tract at residues 1–33 (MKYNPRVTSSRRRNRKPHFTASSSERRVXMSSP) is disordered. Residues 9–18 (SSRRRNRKPH) are compositionally biased toward basic residues.

The protein belongs to the universal ribosomal protein uL24 family.

In Brassica campestris (Field mustard), this protein is Large ribosomal subunit protein uL24 (RPL26).